Here is a 390-residue protein sequence, read N- to C-terminus: Sister chromatid cohesion protein DCC1 (390 aa).

Belongs to the DCC1 family. Component of the ctf18-RFC complex which consists of ctf18, ctf8, dscc1 and the RFC complex.

It localises to the nucleus. Its function is as follows. Loads pcna onto primed templates regulating velocity, spacing and restart activity of replication forks. May couple DNA replication to sister chromatid cohesion. This is Sister chromatid cohesion protein DCC1 (dscc1) from Xenopus laevis (African clawed frog).